We begin with the raw amino-acid sequence, 530 residues long: MGYKKIKFGDDARKSLAIGVNILADAVKTTLGPKGRNVILDKSFNSPLVTKDGVSVAKEIELKDKFENMGAQMVKEVASKTSDVAGDGTTTATVLAQTIVNEGIKAVISGINPMDLKRGIDKTIYQAVLELKKISIPCVDTLSISQVGTISANGETIIGKIISDAMNRVGKNGVITVDEGRGFEDELEVVEGMQFDRGYISPYFISNQENMSSILENCLILITDKKISNVRDIVNILELISKKNKSLFIIAEDIEGEALATLVINNIRGVLKILAVKAPGFGDRRKEILKDISILTGSTLISEELGIKLENIDLSLLGFAKKITSTKENTIILGGGGDENSIKKRINTIKKQISESLSDYDKEKLQERMAKLAGGVAVIRVGSATEIEMKEKKARIEDALHSTRAAVEEGVVIGGGVSLIRILNKLKNLQGDNEDQNYGIQIALKALEAPLRQIVKNSGGEPSIVLNNIKSSSNNFGYDASTGKYGDMFKMGIIDPVKVTRSALQSAGSIGGLLITTEAMIADYSDEKSV.

ATP is bound by residues 30 to 33, Lys51, 87 to 91, Gly415, and Asp495; these read TLGP and DGTTT.

This sequence belongs to the chaperonin (HSP60) family. As to quaternary structure, forms a cylinder of 14 subunits composed of two heptameric rings stacked back-to-back. Interacts with the co-chaperonin GroES.

The protein localises to the cytoplasm. The enzyme catalyses ATP + H2O + a folded polypeptide = ADP + phosphate + an unfolded polypeptide.. Together with its co-chaperonin GroES, plays an essential role in assisting protein folding. The GroEL-GroES system forms a nano-cage that allows encapsulation of the non-native substrate proteins and provides a physical environment optimized to promote and accelerate protein folding. The sequence is that of Chaperonin GroEL from Carsonella ruddii (strain PV).